A 236-amino-acid polypeptide reads, in one-letter code: N-acetyl-alpha-D-glucosaminyl L-malate deacetylase 1 (236 aa).

3 residues coordinate Zn(2+): His-12, Asp-15, and His-113.

Belongs to the PIGL family. Zn(2+) serves as cofactor.

The catalysed reaction is (S)-malyl N-acetyl-alpha-D-glucosaminide + H2O = (S)-malyl alpha-D-glucosaminide + acetate. Involved in bacillithiol (BSH) biosynthesis. Catalyzes the second step of the pathway, the deacetylation of N-acetylglucosaminylmalate (GlcNAc-Mal) to glucosamine malate (GlcN-Mal). The polypeptide is N-acetyl-alpha-D-glucosaminyl L-malate deacetylase 1 (Bacillus subtilis (strain 168)).